A 155-amino-acid polypeptide reads, in one-letter code: MKISIYATLAAITLALPAAAQDGDAAKGEKEFNKCKACHMIQAPDGTDIIKGGKTGPNLYGVVGRKIASEEGFKYGEGILEVAEKNPDLTWTEADLIEYVTDPKPWLVKMTDDKGAKTKMTFKMGKNQADVVAFLAQNSPDAGGDGEAAAEGESN.

Residues 1–20 (MKISIYATLAAITLALPAAA) form the signal peptide. Gln-21 carries the pyrrolidone carboxylic acid modification. Heme c is bound by residues Cys-35, Cys-38, His-39, and Met-120. Positions 150-155 (AEGESN) are excised as a propeptide.

In terms of processing, binds 1 heme c group covalently per subunit.

This is Cytochrome c-550 (cycA) from Paracoccus denitrificans.